Reading from the N-terminus, the 754-residue chain is Polyribonucleotide nucleotidyltransferase (754 aa).

Mg(2+) contacts are provided by Asp525 and Asp531. Positions 591-650 (PRITTIKVPVDKIGEVIGPKGKMINSITEETGASISIEDDGTVFVGASNGEAAQAAIDKI) constitute a KH domain. The S1 motif domain occupies 662–731 (GERFLGTVVK…NRGKISLVLV (70 aa)).

This sequence belongs to the polyribonucleotide nucleotidyltransferase family. It depends on Mg(2+) as a cofactor.

It localises to the cytoplasm. It carries out the reaction RNA(n+1) + phosphate = RNA(n) + a ribonucleoside 5'-diphosphate. Functionally, involved in mRNA degradation. Catalyzes the phosphorolysis of single-stranded polyribonucleotides processively in the 3'- to 5'-direction. The polypeptide is Polyribonucleotide nucleotidyltransferase (Mycolicibacterium vanbaalenii (strain DSM 7251 / JCM 13017 / BCRC 16820 / KCTC 9966 / NRRL B-24157 / PYR-1) (Mycobacterium vanbaalenii)).